The chain runs to 419 residues: L-rhamnose isomerase (419 aa).

Mn(2+) contacts are provided by His262, Asp294, and Asp296.

It belongs to the rhamnose isomerase family. In terms of assembly, homotetramer. Mn(2+) serves as cofactor.

The protein localises to the cytoplasm. It carries out the reaction L-rhamnopyranose = L-rhamnulose. Its pathway is carbohydrate degradation; L-rhamnose degradation; glycerone phosphate from L-rhamnose: step 1/3. Its function is as follows. Catalyzes the interconversion of L-rhamnose and L-rhamnulose. This Shigella flexneri serotype 5b (strain 8401) protein is L-rhamnose isomerase.